Reading from the N-terminus, the 309-residue chain is DNA replication terminus site-binding protein (309 aa).

Belongs to the Tus family.

It is found in the cytoplasm. In terms of biological role, trans-acting protein required for termination of DNA replication. Binds to DNA replication terminator sequences (terA to terF) to prevent the passage of replication forks. The termination efficiency will be affected by the affinity of this protein for the terminator sequence. This is DNA replication terminus site-binding protein from Yersinia enterocolitica serotype O:8 / biotype 1B (strain NCTC 13174 / 8081).